A 238-amino-acid polypeptide reads, in one-letter code: 2,3,4,5-tetrahydropyridine-2,6-dicarboxylate N-acetyltransferase (238 aa).

The protein belongs to the transferase hexapeptide repeat family. DapH subfamily.

It carries out the reaction (S)-2,3,4,5-tetrahydrodipicolinate + acetyl-CoA + H2O = L-2-acetamido-6-oxoheptanedioate + CoA. The protein operates within amino-acid biosynthesis; L-lysine biosynthesis via DAP pathway; LL-2,6-diaminopimelate from (S)-tetrahydrodipicolinate (acetylase route): step 1/3. Functionally, catalyzes the transfer of an acetyl group from acetyl-CoA to tetrahydrodipicolinate. The sequence is that of 2,3,4,5-tetrahydropyridine-2,6-dicarboxylate N-acetyltransferase from Clostridioides difficile (strain 630) (Peptoclostridium difficile).